Reading from the N-terminus, the 1202-residue chain is MAGPSRRRRRLHLSKIYSYTCGKSSFQEDHSNIGGPGFSRVVYCNEPGSPAAERRNYAGNYVRSTKYTVASFFPKSLFEQFRRVANFYFLVTGILSLTDLSPYGAVSALLPLALVISATMVKEGIEDWRRKQQDIEVNNRKVKVHDGNGIFRQEEWRNLRVGDIVRVEKDEFFPADLLLLSSSYEDSVCYVETMNLDGETNLKVKQGLEATSSLLNQDSDFKDFRGVVRCEDPNVNLYVFVGTLALEEERFPLSIQQILLRDSKLRNTEYVYGAVVFTGHDTKVIQNSTDPPSKRSRIERTMDKIIYLMFGLVFLMSFVGSIIFGVETREDKVKNGRTERWYLKPDDADIFFDPERAPMAAIYHFFTATMLYSYFIPISLYVSIEIVKVLQSIFINRDIHMYYEETDKPAQARTSNLNEELGMVDTILSDKTGTLTCNSMEFIKCSIAGKAYGRGITEVERAMAVRSGGSPLVNEDLDVVVDQSGPKVKGFNFEDERVMNGNWVRQPEAAVLQKFFRLLAVCHTAIPETDEESGNVSYEAESPDEAAFVVAAREFGFEFFNRTQNGISFRELDLVSGEKVERVYRLLNVLEFNSTRKRMSVIVRDDDGKLLLLSKGADNVMFERLAKNGRQFEAKTQEHVNQYADAGLRTLVLAYREVDENEYIEFNKSFNEAKASVSEDREALIDEITDKMERDLILLGATAVEDKLQNGVPECIDKLAQAGIKIWVLTGDKMETAINIGFASSLLRQEMKQIIINLETPQIKSLEKSGGKDEIELASRESVVMQLQEGKALLAASGASSEAFALIIDGKSLTYALEDEIKKMFLDLATSCASVICCRSSPKQKALVTRLVKSGTGKTTLAIGDGANDVGMLQEADIGVGISGVEGMQAVMSSDIAIAQFRYLERLLLVHGHWCYSRIASMICYFFYKNITFGVTVFLYEAYTSFSGQPAYNDWFLSLFNVFFSSLPVIALGVFDQDVSARFCYKFPLLYQEGVQNILFSWKRIIGWMFNGFISALAIFFLCKESLKHQLFDPDGKTAGREILGGTMYTCVVWVVNLQMALSISYFTWVQHIVIWGSIAFWYIFLMIYGAMTPSFSTDAYMVFLEALAPAPSYWLTTLFVMIFALIPYFVYKSVQMRFFPKYHQMIQWIRYEGHSNDPEFVEMVRQRSIRPTTVGYTARRAASVRRSARFHDQIYKDLVGV.

Topologically, residues 1–73 (MAGPSRRRRR…STKYTVASFF (73 aa)) are cytoplasmic. The helical transmembrane segment at 74–95 (PKSLFEQFRRVANFYFLVTGIL) threads the bilayer. At 96 to 99 (SLTD) the chain is on the extracellular side. Residues 100–122 (LSPYGAVSALLPLALVISATMVK) traverse the membrane as a helical segment. At 123-305 (EGIEDWRRKQ…SRIERTMDKI (183 aa)) the chain is on the cytoplasmic side. A helical transmembrane segment spans residues 306 to 327 (IYLMFGLVFLMSFVGSIIFGVE). At 328 to 364 (TREDKVKNGRTERWYLKPDDADIFFDPERAPMAAIYH) the chain is on the extracellular side. The helical transmembrane segment at 365–382 (FFTATMLYSYFIPISLYV) threads the bilayer. Over 383–920 (SIEIVKVLQS…HGHWCYSRIA (538 aa)) the chain is Cytoplasmic. Residue Asp430 is the 4-aspartylphosphate intermediate of the active site. Mg(2+) contacts are provided by Asp865 and Asp869. The helical transmembrane segment at 921–940 (SMICYFFYKNITFGVTVFLY) threads the bilayer. Residues 941–954 (EAYTSFSGQPAYND) lie on the Extracellular side of the membrane. Residues 955 to 974 (WFLSLFNVFFSSLPVIALGV) form a helical membrane-spanning segment. The Cytoplasmic segment spans residues 975–1004 (FDQDVSARFCYKFPLLYQEGVQNILFSWKR). The chain crosses the membrane as a helical span at residues 1005–1027 (IIGWMFNGFISALAIFFLCKESL). The Extracellular segment spans residues 1028 to 1040 (KHQLFDPDGKTAG). Residues 1041-1063 (REILGGTMYTCVVWVVNLQMALS) traverse the membrane as a helical segment. Topologically, residues 1064 to 1069 (ISYFTW) are cytoplasmic. A helical transmembrane segment spans residues 1070–1090 (VQHIVIWGSIAFWYIFLMIYG). The Extracellular segment spans residues 1091–1107 (AMTPSFSTDAYMVFLEA). The helical transmembrane segment at 1108–1132 (LAPAPSYWLTTLFVMIFALIPYFVY) threads the bilayer. The Cytoplasmic segment spans residues 1133 to 1202 (KSVQMRFFPK…DQIYKDLVGV (70 aa)).

This sequence belongs to the cation transport ATPase (P-type) (TC 3.A.3) family. Type IV subfamily.

The protein localises to the cell membrane. It carries out the reaction ATP + H2O + phospholipidSide 1 = ADP + phosphate + phospholipidSide 2.. Involved in transport of phospholipids. This Arabidopsis thaliana (Mouse-ear cress) protein is Phospholipid-transporting ATPase 10.